Consider the following 114-residue polypeptide: Reprimo-like protein (114 aa).

A helical transmembrane segment spans residues 61–81 (VVQIAVLCVLSLTVMFGIFFL).

This sequence belongs to the reprimo family.

The protein resides in the membrane. The sequence is that of Reprimo-like protein (rprml) from Danio rerio (Zebrafish).